We begin with the raw amino-acid sequence, 382 residues long: ATP phosphoribosyltransferase regulatory subunit (382 aa).

It belongs to the class-II aminoacyl-tRNA synthetase family. HisZ subfamily. Heteromultimer composed of HisG and HisZ subunits.

It is found in the cytoplasm. It functions in the pathway amino-acid biosynthesis; L-histidine biosynthesis; L-histidine from 5-phospho-alpha-D-ribose 1-diphosphate: step 1/9. Functionally, required for the first step of histidine biosynthesis. May allow the feedback regulation of ATP phosphoribosyltransferase activity by histidine. This Burkholderia lata (strain ATCC 17760 / DSM 23089 / LMG 22485 / NCIMB 9086 / R18194 / 383) protein is ATP phosphoribosyltransferase regulatory subunit.